A 693-amino-acid polypeptide reads, in one-letter code: Glycine--tRNA ligase beta subunit (693 aa).

Belongs to the class-II aminoacyl-tRNA synthetase family. In terms of assembly, tetramer of two alpha and two beta subunits.

Its subcellular location is the cytoplasm. It catalyses the reaction tRNA(Gly) + glycine + ATP = glycyl-tRNA(Gly) + AMP + diphosphate. The protein is Glycine--tRNA ligase beta subunit of Natranaerobius thermophilus (strain ATCC BAA-1301 / DSM 18059 / JW/NM-WN-LF).